The chain runs to 599 residues: Cytosolic Fe-S cluster assembly factor nar1 (599 aa).

[4Fe-4S] cluster-binding residues include cysteine 20, cysteine 62, cysteine 65, cysteine 68, cysteine 210, cysteine 265, cysteine 468, and cysteine 472.

The protein belongs to the NARF family.

Its function is as follows. Component of the cytosolic Fe/S protein assembly machinery. Required for maturation of extramitochondrial Fe/S proteins. May play a role in the transfer of pre-assembled Fe/S clusters to target apoproteins. The polypeptide is Cytosolic Fe-S cluster assembly factor nar1 (nar1) (Aspergillus terreus (strain NIH 2624 / FGSC A1156)).